The chain runs to 76 residues: Large ribosomal subunit protein eL38 (76 aa).

Belongs to the eukaryotic ribosomal protein eL38 family.

The chain is Large ribosomal subunit protein eL38 (RpL38) from Lysiphlebus testaceipes (Greenbugs aphid parastoid).